The sequence spans 86 residues: U1-theraphotoxin-Pc1a (86 aa).

A signal peptide spans 1-21; that stretch reads MMRVLIVTAVFTFFLVLTSSG. Residues 22–49 constitute a propeptide that is removed on maturation; the sequence is HDEDNEQRNILEGMFLDRAIETPKGLEE. 3 disulfide bridges follow: cysteine 53/cysteine 70, cysteine 60/cysteine 75, and cysteine 69/cysteine 80. Position 84 is a valine amide (valine 84).

Expressed by the venom gland.

The protein localises to the secreted. Functionally, possesses strong antiplasmodial activity against the intra-erythrocyte stage of P.falciparum in vitro. IC(50) for inhibiting P.falciparum growth is 1.59 uM. Interacts with infected and healthy erythrocytes. Does not lyse erythrocytes, is not cytotoxic to nucleated mammalian cells, and does not inhibit neuromuscular function. Has neither antibacterial nor antifungal activity. The sequence is that of U1-theraphotoxin-Pc1a from Psalmopoeus cambridgei (Trinidad chevron tarantula).